Consider the following 185-residue polypeptide: Inner membrane lipoprotein DcrB (185 aa).

The signal sequence occupies residues 1–19 (MRNLVKYVGIGLLVMGLAA). Residue Cys-20 is the site of N-palmitoyl cysteine attachment. A lipid anchor (S-diacylglycerol cysteine) is attached at Cys-20.

This sequence belongs to the DcrB family.

It localises to the cell membrane. Functionally, plays a role in cell envelope biogenesis, maintenance of cell envelope integrity and membrane homeostasis. Essential for lipoprotein maturation under conditions where membrane fluidity may be altered. This chain is Inner membrane lipoprotein DcrB, found in Shigella flexneri.